A 230-amino-acid chain; its full sequence is Leucyl/phenylalanyl-tRNA--protein transferase (230 aa).

The protein belongs to the L/F-transferase family.

The protein resides in the cytoplasm. It catalyses the reaction N-terminal L-lysyl-[protein] + L-leucyl-tRNA(Leu) = N-terminal L-leucyl-L-lysyl-[protein] + tRNA(Leu) + H(+). It carries out the reaction N-terminal L-arginyl-[protein] + L-leucyl-tRNA(Leu) = N-terminal L-leucyl-L-arginyl-[protein] + tRNA(Leu) + H(+). The catalysed reaction is L-phenylalanyl-tRNA(Phe) + an N-terminal L-alpha-aminoacyl-[protein] = an N-terminal L-phenylalanyl-L-alpha-aminoacyl-[protein] + tRNA(Phe). Functionally, functions in the N-end rule pathway of protein degradation where it conjugates Leu, Phe and, less efficiently, Met from aminoacyl-tRNAs to the N-termini of proteins containing an N-terminal arginine or lysine. This Rhodopseudomonas palustris (strain BisB18) protein is Leucyl/phenylalanyl-tRNA--protein transferase.